A 252-amino-acid polypeptide reads, in one-letter code: Small ribosomal subunit protein uS3 (252 aa).

A KH type-2 domain is found at Ile39–Val109. Residues Met222–Ser240 show a composition bias toward basic and acidic residues. A disordered region spans residues Met222 to Ala252. A compositionally biased stretch (basic residues) spans Arg241–Ala252.

Belongs to the universal ribosomal protein uS3 family. Part of the 30S ribosomal subunit. Forms a tight complex with proteins S10 and S14.

In terms of biological role, binds the lower part of the 30S subunit head. Binds mRNA in the 70S ribosome, positioning it for translation. This is Small ribosomal subunit protein uS3 from Chlorobium phaeobacteroides (strain BS1).